A 187-amino-acid polypeptide reads, in one-letter code: Ion-translocating oxidoreductase complex subunit B (187 aa).

The segment at 1-26 is hydrophobic; it reads MTHILFAVLVLALLALAFGIILGFAA. The 4Fe-4S domain maps to 32–90; sequence EADPIVDQLDALLPQTQCGQCGYPGCKPYAEALANGDQINKCVPGGDATMRKIADLMGV. [4Fe-4S] cluster contacts are provided by C49, C52, C57, C73, C115, C118, C121, C125, C145, C148, C151, and C155. 4Fe-4S ferredoxin-type domains follow at residues 106–135 and 136–165; these read KVAFIHEDQCIGCTKCIQACPVDAIVGATK and AMHTVIADECTGCDLCVDPCPTDCIEMIPV.

Belongs to the 4Fe4S bacterial-type ferredoxin family. RnfB subfamily. As to quaternary structure, the complex is composed of six subunits: RnfA, RnfB, RnfC, RnfD, RnfE and RnfG. [4Fe-4S] cluster is required as a cofactor.

It is found in the cell inner membrane. Its function is as follows. Part of a membrane-bound complex that couples electron transfer with translocation of ions across the membrane. The polypeptide is Ion-translocating oxidoreductase complex subunit B (Aeromonas hydrophila subsp. hydrophila (strain ATCC 7966 / DSM 30187 / BCRC 13018 / CCUG 14551 / JCM 1027 / KCTC 2358 / NCIMB 9240 / NCTC 8049)).